A 349-amino-acid polypeptide reads, in one-letter code: tRNA pseudouridine synthase D (349 aa).

Residue F26 participates in substrate binding. Catalysis depends on D79, which acts as the Nucleophile. Residue N128 coordinates substrate. Residues 154–303 form the TRUD domain; that stretch reads GVPNYFGSQR…VDAARRAMLV (150 aa). F329 provides a ligand contact to substrate.

This sequence belongs to the pseudouridine synthase TruD family.

The catalysed reaction is uridine(13) in tRNA = pseudouridine(13) in tRNA. Functionally, responsible for synthesis of pseudouridine from uracil-13 in transfer RNAs. In Erwinia tasmaniensis (strain DSM 17950 / CFBP 7177 / CIP 109463 / NCPPB 4357 / Et1/99), this protein is tRNA pseudouridine synthase D.